The following is a 335-amino-acid chain: Methionine aminopeptidase 1D, mitochondrial (335 aa).

The transit peptide at 1 to 19 directs the protein to the mitochondrion; sequence MAAPSGVHLLVRRGSHRIF. Residue His-161 coordinates substrate. A divalent metal cation contacts are provided by Asp-178, Asp-189, and His-252. His-259 serves as a coordination point for substrate. 2 residues coordinate a divalent metal cation: Glu-284 and Glu-315.

This sequence belongs to the peptidase M24A family. Methionine aminopeptidase type 1 subfamily. It depends on Co(2+) as a cofactor. Zn(2+) serves as cofactor. The cofactor is Mn(2+). Requires Fe(2+) as cofactor. In terms of tissue distribution, overexpressed in colon cancer cell lines and colon tumors as compared to normal tissues (at protein level).

The protein localises to the mitochondrion. It carries out the reaction Release of N-terminal amino acids, preferentially methionine, from peptides and arylamides.. Functionally, removes the N-terminal methionine from nascent proteins. The N-terminal methionine is often cleaved when the second residue in the primary sequence is small and uncharged (Met-Ala-, Cys, Gly, Pro, Ser, Thr, or Val). Requires deformylation of the N(alpha)-formylated initiator methionine before it can be hydrolyzed. May play a role in colon tumorigenesis. The sequence is that of Methionine aminopeptidase 1D, mitochondrial (METAP1D) from Homo sapiens (Human).